The chain runs to 290 residues: Endoplasmic reticulum-Golgi intermediate compartment protein 1 (290 aa).

Topologically, residues 1–27 are cytoplasmic; that stretch reads MSFDVRRFDIYRKVPKDLTQPTYTGAF. Residues 28–48 traverse the membrane as a helical segment; it reads ISICCCVFMLFLFLSELTGFI. The Lumenal segment spans residues 49-254; sequence ATEIVNELYV…RRRPFYRFIT (206 aa). Asparagine 74 carries an N-linked (GlcNAc...) asparagine glycan. The helical transmembrane segment at 255 to 275 threads the bilayer; the sequence is TICAIIGGTFTVAGIIDSCIF. At 276 to 290 the chain is on the cytoplasmic side; that stretch reads TASEAWKKIQIGKMS.

Belongs to the ERGIC family.

It localises to the endoplasmic reticulum membrane. The protein localises to the endoplasmic reticulum-Golgi intermediate compartment membrane. It is found in the golgi apparatus membrane. Possible role in transport between endoplasmic reticulum and Golgi. The polypeptide is Endoplasmic reticulum-Golgi intermediate compartment protein 1 (ergic1) (Danio rerio (Zebrafish)).